The primary structure comprises 101 residues: Large ribosomal subunit protein uL24 (101 aa).

This sequence belongs to the universal ribosomal protein uL24 family. Part of the 50S ribosomal subunit.

Functionally, one of two assembly initiator proteins, it binds directly to the 5'-end of the 23S rRNA, where it nucleates assembly of the 50S subunit. Its function is as follows. One of the proteins that surrounds the polypeptide exit tunnel on the outside of the subunit. In Clostridioides difficile (strain 630) (Peptoclostridium difficile), this protein is Large ribosomal subunit protein uL24.